The sequence spans 346 residues: tRNA-specific 2-thiouridylase MnmA (346 aa).

ATP is bound at residue 6 to 13; the sequence is AMSGGTDS. Cys-90 (nucleophile) is an active-site residue. Cys-90 and Cys-187 are disulfide-bonded. Gly-114 is an ATP binding site. Residues 137-139 form an interaction with tRNA region; it reads KDQ. Cys-187 (cysteine persulfide intermediate) is an active-site residue. Residues 292–293 are interaction with tRNA; it reads RY.

The protein belongs to the MnmA/TRMU family.

It is found in the cytoplasm. The enzyme catalyses S-sulfanyl-L-cysteinyl-[protein] + uridine(34) in tRNA + AH2 + ATP = 2-thiouridine(34) in tRNA + L-cysteinyl-[protein] + A + AMP + diphosphate + H(+). Its function is as follows. Catalyzes the 2-thiolation of uridine at the wobble position (U34) of tRNA, leading to the formation of s(2)U34. In Nitratidesulfovibrio vulgaris (strain ATCC 29579 / DSM 644 / CCUG 34227 / NCIMB 8303 / VKM B-1760 / Hildenborough) (Desulfovibrio vulgaris), this protein is tRNA-specific 2-thiouridylase MnmA.